Consider the following 497-residue polypeptide: ADP-dependent glucokinase (497 aa).

An N-terminal signal peptide occupies residues 1 to 22; the sequence is MALWRGSAYAGFLALAVGCVFL. One can recognise an ADPK domain in the interval 52–497; that stretch reads SPEGRLAAAW…LFYSEVHPHY (446 aa). Mg(2+) contacts are provided by Glu-297, Glu-328, and Asp-481. Catalysis depends on Asp-481, which acts as the Proton acceptor.

It belongs to the ADP-dependent glucokinase family. Monomer. Requires Mg(2+) as cofactor.

The protein localises to the secreted. It carries out the reaction D-glucose + ADP = D-glucose 6-phosphate + AMP + H(+). Its pathway is carbohydrate degradation; glycolysis. In terms of biological role, catalyzes the phosphorylation of D-glucose to D-glucose 6-phosphate using ADP as the phosphate donor. GDP and CDP can replace ADP, but with reduced efficiency. In Homo sapiens (Human), this protein is ADP-dependent glucokinase (ADPGK).